A 306-amino-acid polypeptide reads, in one-letter code: MSNSKDEVERIDWLEAELADTIDEDYELELSEPTLSEKIREIYRKAHPPALPRMDYFRALLALQAELIKLQDWVVYHKQKVVVIFEGRDAAGKGGVIKRITQRLNPRIVRTVALPAPSDREKTQWYFQRYVPHLPAGGEIVLFDRSWYNRCGVERVMGFATEEEVEQFFDDVPEFERMLVRSGVRLVKYWFSITDEEQQLRFLTRIHDPLKQWKLSPMDLQSRVRWEAYTKAKEETFARTNIREAPWHIVEANDKKRARLNCIDHLLKQIPYEDVPHEDITLPERIFNPNYERKVLPPELYVPAKY.

This sequence belongs to the polyphosphate kinase 2 (PPK2) family. Class I subfamily.

The catalysed reaction is [phosphate](n) + ATP = [phosphate](n+1) + ADP. It catalyses the reaction [phosphate](n) + GTP = [phosphate](n+1) + GDP. Uses inorganic polyphosphate (polyP) as a donor to convert ADP to ATP. Can also convert GDP to GTP, with lower efficiency. The chain is ADP-polyphosphate phosphotransferase 2 from Rhizobium meliloti (strain 1021) (Ensifer meliloti).